Consider the following 35-residue polypeptide: Photosystem II reaction center protein M (35 aa).

A helical transmembrane segment spans residues Ile5–Ile25.

The protein belongs to the PsbM family. PSII is composed of 1 copy each of membrane proteins PsbA, PsbB, PsbC, PsbD, PsbE, PsbF, PsbH, PsbI, PsbJ, PsbK, PsbL, PsbM, PsbT, PsbX, PsbY, PsbZ, Psb30/Ycf12, at least 3 peripheral proteins of the oxygen-evolving complex and a large number of cofactors. It forms dimeric complexes.

Its subcellular location is the plastid. The protein resides in the chloroplast thylakoid membrane. Its function is as follows. One of the components of the core complex of photosystem II (PSII). PSII is a light-driven water:plastoquinone oxidoreductase that uses light energy to abstract electrons from H(2)O, generating O(2) and a proton gradient subsequently used for ATP formation. It consists of a core antenna complex that captures photons, and an electron transfer chain that converts photonic excitation into a charge separation. This subunit is found at the monomer-monomer interface. The sequence is that of Photosystem II reaction center protein M from Panax quinquefolius (American ginseng).